The chain runs to 105 residues: MRKRREGSAAPSTQEVTRVRTPRKENHEVLATVGSLLGSKRVNLQCMDGVVRMGRIPGSKNKKMWIREGDVVIVTPWEIQDTKADVIWKYTRPQIEWLERKGYLK.

Residues 1–22 (MRKRREGSAAPSTQEVTRVRTP) are disordered. In terms of domain architecture, S1-like spans 17-91 (TRVRTPRKEN…TKADVIWKYT (75 aa)).

It belongs to the eIF-1A family.

In terms of biological role, seems to be required for maximal rate of protein biosynthesis. Enhances ribosome dissociation into subunits and stabilizes the binding of the initiator Met-tRNA(I) to 40 S ribosomal subunits. The protein is Translation initiation factor 1A 2 (eIF1A2) of Methanosarcina acetivorans (strain ATCC 35395 / DSM 2834 / JCM 12185 / C2A).